The chain runs to 101 residues: Large ribosomal subunit protein bL21 (101 aa).

Belongs to the bacterial ribosomal protein bL21 family. As to quaternary structure, part of the 50S ribosomal subunit. Contacts protein L20.

Functionally, this protein binds to 23S rRNA in the presence of protein L20. The polypeptide is Large ribosomal subunit protein bL21 (Sulfurovum sp. (strain NBC37-1)).